The sequence spans 98 residues: NADH-ubiquinone oxidoreductase chain 4L (98 aa).

The next 3 helical transmembrane spans lie at 1-21 (MTMV…GLLM), 29-49 (SLLC…ITIL), and 61-81 (IILL…LVMV).

This sequence belongs to the complex I subunit 4L family. As to quaternary structure, core subunit of respiratory chain NADH dehydrogenase (Complex I) which is composed of 45 different subunits.

Its subcellular location is the mitochondrion inner membrane. The enzyme catalyses a ubiquinone + NADH + 5 H(+)(in) = a ubiquinol + NAD(+) + 4 H(+)(out). Functionally, core subunit of the mitochondrial membrane respiratory chain NADH dehydrogenase (Complex I) which catalyzes electron transfer from NADH through the respiratory chain, using ubiquinone as an electron acceptor. Part of the enzyme membrane arm which is embedded in the lipid bilayer and involved in proton translocation. This is NADH-ubiquinone oxidoreductase chain 4L (MT-ND4L) from Ommatophoca rossii (Ross seal).